We begin with the raw amino-acid sequence, 363 residues long: tRNA dimethylallyltransferase (363 aa).

Residue 65–72 coordinates ATP; it reads GPTASGKS. 67 to 72 is a substrate binding site; sequence TASGKS. 2 interaction with substrate tRNA regions span residues 90–93 and 214–218; these read DSMQ and QRLIR.

This sequence belongs to the IPP transferase family. As to quaternary structure, monomer. It depends on Mg(2+) as a cofactor.

It catalyses the reaction adenosine(37) in tRNA + dimethylallyl diphosphate = N(6)-dimethylallyladenosine(37) in tRNA + diphosphate. Functionally, catalyzes the transfer of a dimethylallyl group onto the adenine at position 37 in tRNAs that read codons beginning with uridine, leading to the formation of N6-(dimethylallyl)adenosine (i(6)A). The chain is tRNA dimethylallyltransferase from Rickettsia rickettsii (strain Sheila Smith).